Here is a 472-residue protein sequence, read N- to C-terminus: 23S rRNA (uracil(1939)-C(5))-methyltransferase RlmD (472 aa).

The span at 1–15 shows a compositional bias: basic residues; it reads MSRTAPHRRAPKRYK. The tract at residues 1–23 is disordered; that stretch reads MSRTAPHRRAPKRYKTPPPAPAH. The 65-residue stretch at 23-87 folds into the TRAM domain; it reads HVVTGNEPVI…PKFEQAEVVQ (65 aa). 4 residues coordinate [4Fe-4S] cluster: C100, C106, C109, and C188. S-adenosyl-L-methionine contacts are provided by Q296, F325, N330, E346, N374, and D395. C428 serves as the catalytic Nucleophile.

Belongs to the class I-like SAM-binding methyltransferase superfamily. RNA M5U methyltransferase family. RlmD subfamily.

The catalysed reaction is uridine(1939) in 23S rRNA + S-adenosyl-L-methionine = 5-methyluridine(1939) in 23S rRNA + S-adenosyl-L-homocysteine + H(+). Functionally, catalyzes the formation of 5-methyl-uridine at position 1939 (m5U1939) in 23S rRNA. The protein is 23S rRNA (uracil(1939)-C(5))-methyltransferase RlmD of Paraburkholderia xenovorans (strain LB400).